A 104-amino-acid chain; its full sequence is Small ribosomal subunit protein uS10 (104 aa).

Belongs to the universal ribosomal protein uS10 family. As to quaternary structure, part of the 30S ribosomal subunit.

Involved in the binding of tRNA to the ribosomes. The protein is Small ribosomal subunit protein uS10 of Nitrosococcus oceani (strain ATCC 19707 / BCRC 17464 / JCM 30415 / NCIMB 11848 / C-107).